The sequence spans 328 residues: uncharacterized protein (328 aa).

Residues 1 to 22 (MPVKPNQPRPSTKQDPSSGASR) are disordered. Over residues 9–21 (RPSTKQDPSSGAS) the composition is skewed to polar residues. 6 helical membrane passes run 66–86 (FSFL…GFVL), 126–146 (TVGL…IGNL), 176–196 (FLSL…TSVA), 221–241 (LIAL…ILWV), 255–275 (GTLM…VALP), and 290–310 (IGLM…AAWI).

This sequence to E.coli YhjD.

The protein localises to the cell inner membrane. This is an uncharacterized protein from Dickeya dadantii (strain 3937) (Erwinia chrysanthemi (strain 3937)).